The sequence spans 12345 residues: Muscle-specific protein 300 kDa (12345 aa).

Disordered regions lie at residues 1–68 (MADS…STVT) and 121–152 (WSDG…DAEN). The Cytoplasmic portion of the chain corresponds to 1-12295 (MADSGGPGSK…GARFLGRVAR (12295 aa)). Residues 19–28 (AGGGGAGAAG) show a composition bias toward gly residues. Residues 45-60 (EQKSSREQVLEEEKSQ) show a composition bias toward basic and acidic residues. An LRR 1 repeat occupies 249 to 273 (FKELENFLEGERTVREVPSADGVRT). 3 disordered regions span residues 295 to 325 (EGYV…RSVD), 387 to 488 (TVQV…RKLI), and 504 to 526 (GKSN…GRPA). Residues 299-321 (SPRDSPSWSRSSYSSERSSVTPP) show a composition bias toward low complexity. Composition is skewed to polar residues over residues 387 to 404 (TVQV…STPQ) and 414 to 434 (TTKT…QTGP). A compositionally biased stretch (low complexity) spans 462 to 484 (TITSTTTKSTSSSTSATSSSSTS). Over residues 511–520 (NDIDIDNDSD) the composition is skewed to acidic residues. Calponin-homology (CH) domains lie at 630 to 737 (RVQK…LYFQ) and 777 to 882 (QGAR…HKYP). Residues 823–847 (LVNLAELKKTSNRQRLETAFDVAES) form an LRR 2 repeat. A TPR 1 repeat occupies 919–952 (SSFPRDFGEYLLARSEVDAHLAAYNRLKQLIESQ). 3 LRR repeats span residues 1089–1112 (CCLI…YGHE), 1389–1411 (HLFH…IHQW), and 1616–1642 (LKDV…ILQR). One copy of the TPR 2 repeat lies at 1603-1636 (LEFRLDENAFYQSLKDVEKELQLEQQALNRNEDV). One copy of the HAT 1 repeat lies at 1903–1935 (TGWNQAYTETSDKLQALKGTQAVWSEFVDQKND). 2 LRR repeats span residues 2087-2109 (KQLD…IAEA) and 2558-2581 (QQQI…FGQA). The Calponin-homology (CH) 3 domain maps to 2109–2233 (AKRLKGEITK…SRWTAVHENA (125 aa)). The stretch at 2663-2696 (ADRIQKYNLISQALREYADSKDKFSKELKKAEDL) is one TPR 3 repeat. The tract at residues 2699 to 2724 (AIPQQPRDETELHQASEKTRKTMEQL) is disordered. Residues 2704–2724 (PRDETELHQASEKTRKTMEQL) are compositionally biased toward basic and acidic residues. 3 LRR repeats span residues 2728-2751 (KLSL…IGEP), 2935-2959 (CRAL…VDEL), and 3030-3053 (SSDK…IDDC). A coiled-coil region spans residues 2894 to 2962 (EQELRRRSKE…KQKVDELRNL (69 aa)). Residues 3110–3207 (LWSQYEQSNE…AVSKALTSYI (98 aa)) form a Spectrin 1 repeat. The stretch at 3346 to 3379 (KAKVPTTDELYPTLATKKAALQNYKTQLQEITLH) is one TPR 4 repeat. LRR repeat units lie at residues 3370–3393 (KTQL…AVTL), 3437–3462 (LEKA…TFEK), 3530–3556 (LVKL…WMKN), and 3611–3634 (NLKL…SIAK). The stretch at 3539 to 3633 (KWDEFDTIIE…LKNLCKESIA (95 aa)) is one Spectrin 2 repeat. Residues 3629–3662 (KESIAKYVNYVKDHESFDKDFDSFKQNLQSSVDE) form a TPR 5 repeat. One copy of the HAT 2 repeat lies at 3706-3739 (KLYGHTSPEGREIIRQQLRALRTLWDNYTDDLNS). Residues 3748–3771 (LLQFNEFSIAQDQLTKWLKDVDKA) form an LRR 15 repeat. One copy of the Spectrin 3 repeat lies at 4177–4273 (SYQDILNQTV…YDQVGQDCAK (97 aa)). A TPR 6 repeat occupies 4360–4393 (EVMARDLANLHADFEKFGASLSDVKSGLENRLQQ). The stretch at 4371 to 4403 (ADFEKFGASLSDVKSGLENRLQQWNDYEINLDR) is one HAT 3 repeat. One copy of the Spectrin 4 repeat lies at 4611–4701 (FDEIADSLKS…GKLQKRAQNY (91 aa)). LRR repeat units lie at residues 4654–4676 (NDIN…LPEK) and 4742–4763 (EQIS…LADE). One copy of the HAT 4 repeat lies at 4799–4830 (EWESLLTTISSTIEAIEARLQHWSEYEQLRDQ). The Spectrin 5 repeat unit spans residues 4820–4919 (HWSEYEQLRD…VKELNNRWQQ (100 aa)). The stretch at 4839–4863 (DNNLHAIDLKEDLPKKRAQLDALKA) is one LRR 18 repeat. One copy of the HAT 5 repeat lies at 4894 to 4926 (ASGPELVTKYQQIFHKVKELNNRWQQYVTSHED). LRR repeat units follow at residues 5266–5289 (QIDI…EKQV) and 5333–5357 (SSVY…RDQH). The stretch at 5645-5678 (SAEPEDCEIIEQEVALLQEEFDAYREALNKAKDY) is one TPR 7 repeat. 3 LRR repeats span residues 5761–5784 (SNAI…VMRR), 5820–5843 (PGTL…FETG), and 5979–6002 (TKFD…VNSH). A Spectrin 6 repeat occupies 5791–5895 (EHQQHHSLYE…DLNDVRQKLA (105 aa)). The stretch at 6088-6120 (SEWETLQTISRDARSSLESCLAAWQTFLQKFNK) is one HAT 6 repeat. Spectrin repeat units follow at residues 6321–6405 (RWND…DKLK) and 6424–6530 (AYHQ…RLLE). Coiled coils occupy residues 6356–6397 (MKTL…VNRL) and 6454–6484 (REQT…LNAK). The LRR 24 repeat unit spans residues 6363 to 6387 (YKTLSNELKLKGNELEQLQSEARDL). The stretch at 6522–6555 (VQIKNRLLESLAKFQEYEDTLDSIMRNLETYEPI) is one TPR 8 repeat. LRR repeat units follow at residues 6531–6554 (SLAK…TYEP) and 6560–6587 (LDAP…LNNE). The stretch at 6567 to 6597 (LELAQNQLRCAQEMQNKLNNEKSRLAAAVQA) forms a coiled coil. The tract at residues 6631-6657 (EDLLDQKPPPKTRSSTGGVSTDDDKDE) is disordered. The TPR 9 repeat unit spans residues 6660-6695 (VEIQVELSDVNEALLDPIAHERVKNYRRIVRLNSAH). The LRR 27 repeat unit spans residues 7004-7026 (SALRNLNTENRNLSGVLKAELDR). One copy of the TPR 10 repeat lies at 7161–7195 (EMETATEGELRTTSLPVLEEQLAHYKKLLSDAENK). LRR repeat units lie at residues 7219-7242 (LKLN…IDDR), 7300-7318 (KELK…DDLP), 7319-7339 (ELQS…DQLA), and 7340-7361 (HLRQ…IIAF). Residues 7419–7457 (KNSITEQLQSLKNQLQNLRKAVESQRQKHQLQLESHKKM) are a coiled coil. One copy of the LRR 32 repeat lies at 7524-7547 (SSLLEMLSEGRSLVASLPHELEER). The stretch at 7644–7676 (TKLTNTLANAKTQQSELEKEAERWREYQQSIDR) is one HAT 7 repeat. A TPR 11 repeat occupies 7654–7687 (KTQQSELEKEAERWREYQQSIDRVKATIERTKFV). LRR repeat units lie at residues 7692 to 7714 (QNLA…VQSQ), 7752 to 7777 (QDLV…GFEN), and 7816 to 7840 (LREE…ILTF). A TPR 12 repeat occupies 7759–7792 (EQRRDNLQQLAEHWDGFENSLHAWEKALGRLEDK). Residues 7799-7935 (TVRSRRHLED…NSQVQQAAEE (137 aa)) adopt a coiled-coil conformation. The TPR 13 repeat unit spans residues 7878-7911 (SKDLEEIEQVFRRISQLQDKLNALHEQLQSVHVY). 4 LRR repeats span residues 8178–8201 (KISV…EWDQ), 8238–8264 (EKTL…HFRN), 8298–8321 (EQTL…IIQE), and 8354–8377 (DELL…SLDG). A TPR 14 repeat occupies 8431 to 8464 (QQGITMIANAMHGQKKRQQEIDEYQQHLLELEQW). An LRR 40 repeat occupies 8534 to 8557 (EQLQSIITILREQVTVATKRIFTI). Disordered regions lie at residues 8583-8616 (IKPP…EEEI), 8966-9023 (QKPT…LPAP), 9131-9158 (EFEP…QVVA), 9361-9459 (GKES…PDSD), 9502-9735 (LVED…TSIS), and 9769-9797 (TMQL…EQQL). A compositionally biased stretch (polar residues) spans 8601-8611 (SNENTIDSSSM). The span at 8982 to 9011 (TQVTTTTRTTTATTQEQEQPEQQTQPTTTE) shows a compositional bias: low complexity. The span at 9136 to 9151 (SPHEESTKSDLVKPQE) shows a compositional bias: basic and acidic residues. A compositionally biased stretch (basic residues) spans 9394 to 9404 (KRRRKKKKRRD). Over residues 9410-9419 (ELEQEQETEP) the composition is skewed to acidic residues. Positions 9420-9439 (EPVAAVKEPEVSSDVPVSPE) are enriched in low complexity. A compositionally biased stretch (basic and acidic residues) spans 9440–9451 (DSPRDTVRHESI). Composition is skewed to polar residues over residues 9544 to 9563 (AVQT…SQTL), 9587 to 9597 (ISTTEIQTDVS), and 9605 to 9625 (EISS…TTPK). The span at 9658–9680 (TSEQSTVTETTTTTETHVQTTTP) shows a compositional bias: low complexity. A compositionally biased stretch (basic and acidic residues) spans 9681 to 9698 (EPREQTEVIKPETAHEET). The LRR 41 repeat unit spans residues 9699–9721 (STVELVQFADGEMQTTPPGDQQP). Residues 9711–9735 (MQTTPPGDQQPASLDDSSLTATSIS) are compositionally biased toward polar residues. Basic residues predominate over residues 9777–9788 (KKSKKDKKKKQK). 4 LRR repeats span residues 9995–10019 (SNVL…ILEV), 10073–10096 (EEKL…VVQL), 10252–10276 (KEFT…SLEQ), and 10353–10376 (RDEL…TSAD). Coiled coils occupy residues 10072-10099 (SEEK…LERQ) and 10172-10257 (LSAK…FTKI). Residues 10231-10264 (QAERERVLQLQSLAEEYEQTLKEFTKITVLADKL) form a TPR 15 repeat. An HAT 8 repeat occupies 10426–10458 (IVLLKLREEVALYLHRLLVFKEIWVQYEQQTDK). 3 LRR repeats span residues 10512–10535 (EKSL…QLED), 10570–10593 (EREL…EEEL), and 10644–10667 (AEEL…ISNQ). The stretch at 10854 to 10888 (VVAWNDTSENLQQLRTRYQRAVELWDKYRNASAAV) is one TPR 16 repeat. Residues 10855-10887 (VAWNDTSENLQQLRTRYQRAVELWDKYRNASAA) form an HAT 9 repeat. LRR repeat units lie at residues 10907-10929 (DALQ…ILEL) and 11021-11043 (AHLQ…HQNS). Residues 11016-11046 (LAALRAHLQTLARTEEQLRQLKERHQNSEVA) adopt a coiled-coil conformation. One copy of the HAT 10 repeat lies at 11070–11104 (DTFQEYHRLSTRLARSQNSSEALRLWRQYLQHVQS). One copy of the TPR 17 repeat lies at 11072–11105 (FQEYHRLSTRLARSQNSSEALRLWRQYLQHVQSF). Residues 11197–11222 (EAERNALQLRYIHLKRVPHLKHRLDA) form an LRR 51 repeat. 2 coiled-coil regions span residues 11220-11247 (LDAM…LARH) and 11281-11308 (LQRV…AQKL). LRR repeat units lie at residues 11342–11365 (SALE…DMKT), 11398–11422 (LSNY…VEKD), 11670–11692 (EELE…LAMS), 11697–11720 (PENI…LTPR), and 11744–11766 (EATN…ENQQ). Positions 11655-11685 (KHKLEERQMELRAKLEELESQSVNLRQLEQI) form a coiled coil. The stretch at 11776–11806 (LQRLESLEKKLQDAQQHVQQADNLAQEAKTR) forms a coiled coil. The stretch at 11804-11836 (KTRTKQQPQLKQLLELVSAYTTLWQTVQTRIVT) is one HAT 11 repeat. LRR repeat units lie at residues 11959-11981 (DTVA…RQQH) and 12198-12220 (SRLT…YIVK). Residues 12253–12272 (SMQAAAPNTENANNTDGGDA) form a disordered region. Over residues 12256–12267 (AAAPNTENANNT) the composition is skewed to low complexity. Residues 12287–12345 (ARFLGRVARASLPIQALMLLLLGVATLVPHGEDYTCMFSNTFARSLEPMLSYPHGPPPT) enclose the KASH domain. Residues 12296-12316 (ASLPIQALMLLLLGVATLVPH) traverse the membrane as a helical; Anchor for type IV membrane protein segment. One copy of the LRR 59 repeat lies at 12301 to 12323 (QALMLLLLGVATLVPHGEDYTCM). The Perinuclear space segment spans residues 12317-12345 (GEDYTCMFSNTFARSLEPMLSYPHGPPPT).

It belongs to the nesprin family. As to quaternary structure, core component of LINC complexes which are composed of inner nuclear membrane SUN domain-containing proteins coupled to outer nuclear membrane KASH domain-containing nesprins. Interacts with klar; this interaction allows the anchoring of the Msp300 nuclear ring structure to the nuclear envelope. Interacts with sls; this interaction mediates the recruitment of Msp300 to the Z-disks.

Its subcellular location is the nucleus membrane. The protein localises to the cytoplasm. It localises to the myofibril. The protein resides in the sarcomere. It is found in the z line. Its subcellular location is the cytoskeleton. The protein localises to the microtubule organizing center. It localises to the perinuclear region. Functionally, component of the LINC (LInker of Nucleoskeleton and Cytoskeleton) complex involved in the connection between the nuclear lamina and the cytoskeleton. Collaborates with Klar to promote even spacing of the myonuclei at the periphery of striated muscle fibers by mediating a tight association between a nuclear ring structure of Msp300 and the plus ends of a unique astral MT network. In addition, is essential for anchoring nuclei, mitochondria and endoplasmic reticulum (ER) structures to the Z-disks. In fat body cells, part of perinuclear non-centrosomal microtubule-organizing centers (ncMTOCs) which function to accommodate the organization of microtubule (MT) networks to control nuclear positioning and dynein motor-based retrograde endosomal trafficking. Functions as the primary organizer of the ncMTOC by recruiting Patronin, shot and msps to the organizing centre. Within the ncMTOC, Msp300 and shot anchors the ncMTOC at the nuclear surface and recruits the MT minus-end regulators Patronin and Nin for assembly, anchoring and/or stabilization of circumferential and radial MTs at the ncMTOCs. Patronin, and perhaps Nin, recruits msps to the ncMTOC for the gamma-tubulin-independent elongation of radial MTs. This chain is Muscle-specific protein 300 kDa, found in Drosophila melanogaster (Fruit fly).